The sequence spans 101 residues: NADH-quinone oxidoreductase subunit K (101 aa).

The next 3 helical transmembrane spans lie at 4–24 (LGHLLGLGAVLFCISLAGIFL), 30–50 (IVLLMSIELMLLSVNVNFIAF), and 62–82 (FVFFILTVAAAEAAIGLAILV).

It belongs to the complex I subunit 4L family. In terms of assembly, NDH-1 is composed of 14 different subunits. Subunits NuoA, H, J, K, L, M, N constitute the membrane sector of the complex.

The protein resides in the cell inner membrane. The enzyme catalyses a quinone + NADH + 5 H(+)(in) = a quinol + NAD(+) + 4 H(+)(out). Functionally, NDH-1 shuttles electrons from NADH, via FMN and iron-sulfur (Fe-S) centers, to quinones in the respiratory chain. The immediate electron acceptor for the enzyme in this species is believed to be ubiquinone. Couples the redox reaction to proton translocation (for every two electrons transferred, four hydrogen ions are translocated across the cytoplasmic membrane), and thus conserves the redox energy in a proton gradient. The chain is NADH-quinone oxidoreductase subunit K from Xanthomonas axonopodis pv. citri (strain 306).